A 383-amino-acid chain; its full sequence is ATP phosphoribosyltransferase regulatory subunit (383 aa).

Belongs to the class-II aminoacyl-tRNA synthetase family. HisZ subfamily. In terms of assembly, heteromultimer composed of HisG and HisZ subunits.

The protein resides in the cytoplasm. It participates in amino-acid biosynthesis; L-histidine biosynthesis; L-histidine from 5-phospho-alpha-D-ribose 1-diphosphate: step 1/9. Required for the first step of histidine biosynthesis. May allow the feedback regulation of ATP phosphoribosyltransferase activity by histidine. This Cupriavidus metallidurans (strain ATCC 43123 / DSM 2839 / NBRC 102507 / CH34) (Ralstonia metallidurans) protein is ATP phosphoribosyltransferase regulatory subunit.